We begin with the raw amino-acid sequence, 178 residues long: Beta-lactoglobulin-1A/1C (178 aa).

The first 18 residues, 1–18 (MRCLLLTLGLALLCGVQA), serve as a signal peptide directing secretion. Cystine bridges form between C84–C176 and C124–C137.

Belongs to the calycin superfamily. Lipocalin family. Under physiological conditions beta-lactoglobulin exists as an equilibrium mixture of monomeric and dimeric forms.

The protein localises to the secreted. In terms of biological role, lactoglobulin is the primary component of whey, it binds retinol and is probably involved in the transport of that molecule. The sequence is that of Beta-lactoglobulin-1A/1C from Sus scrofa (Pig).